The sequence spans 149 residues: 18 kDa antigen 1 (149 aa).

The sHSP domain occupies 21–131 (TAARPAVMPM…KPRKIAVGRG (111 aa)).

The protein belongs to the small heat shock protein (HSP20) family.

Its function is as follows. Not known. This protein is one of the major immune reactive proteins in mycobacteria. The sequence is that of 18 kDa antigen 1 from Mycobacterium intracellulare.